The following is a 29-amino-acid chain: Protein 1.5 (29 aa).

This Escherichia phage T7 (Bacteriophage T7) protein is Protein 1.5.